We begin with the raw amino-acid sequence, 898 residues long: Phosphoenolpyruvate carboxylase (898 aa).

Active-site residues include His-138 and Lys-561.

It belongs to the PEPCase type 1 family. Mg(2+) serves as cofactor.

The catalysed reaction is oxaloacetate + phosphate = phosphoenolpyruvate + hydrogencarbonate. Its function is as follows. Forms oxaloacetate, a four-carbon dicarboxylic acid source for the tricarboxylic acid cycle. This chain is Phosphoenolpyruvate carboxylase, found in Streptococcus pneumoniae serotype 2 (strain D39 / NCTC 7466).